Consider the following 269-residue polypeptide: Indole-3-glycerol phosphate synthase 1 (269 aa).

This sequence belongs to the TrpC family.

The enzyme catalyses 1-(2-carboxyphenylamino)-1-deoxy-D-ribulose 5-phosphate + H(+) = (1S,2R)-1-C-(indol-3-yl)glycerol 3-phosphate + CO2 + H2O. It participates in amino-acid biosynthesis; L-tryptophan biosynthesis; L-tryptophan from chorismate: step 4/5. The chain is Indole-3-glycerol phosphate synthase 1 (trpC1) from Streptomyces coelicolor (strain ATCC BAA-471 / A3(2) / M145).